The chain runs to 139 residues: Flagellar assembly factor FliW 2 (139 aa).

It belongs to the FliW family. Interacts with translational regulator CsrA and flagellin(s).

The protein resides in the cytoplasm. Acts as an anti-CsrA protein, binds CsrA and prevents it from repressing translation of its target genes, one of which is flagellin. Binds to flagellin and participates in the assembly of the flagellum. The sequence is that of Flagellar assembly factor FliW 2 from Helicobacter hepaticus (strain ATCC 51449 / 3B1).